Here is a 448-residue protein sequence, read N- to C-terminus: Protein Z-dependent protease inhibitor (448 aa).

The first 21 residues, 1 to 21 (MRVASSLFLPVLLTEVWLVTS), serve as a signal peptide directing secretion. A disordered region spans residues 33–70 (VHLESQDYENQTWEEYTRTDPREEEEEEEEKEEGKDEE). Residues 54–63 (REEEEEEEEK) show a composition bias toward acidic residues. The N-linked (GlcNAc...) asparagine glycan is linked to Asn81. A heparin-binding region spans residues 140–157 (AGPLILPALFKKVKETFS). Asn184, Asn278, and Asn299 each carry an N-linked (GlcNAc...) asparagine glycan.

It belongs to the serpin family. Phosphorylated by FAM20C in the extracellular medium. In terms of tissue distribution, detectable in liver, but not in heart, brain, spleen, lung, kidney, skeletal muscle or testes.

The protein resides in the secreted. Functionally, inhibits activity of the coagulation protease factor Xa in the presence of PROZ, calcium and phospholipids. Also inhibits factor XIa in the absence of cofactors. This Mus musculus (Mouse) protein is Protein Z-dependent protease inhibitor (Serpina10).